We begin with the raw amino-acid sequence, 340 residues long: Serpentine receptor class alpha-23 (340 aa).

6 helical membrane-spanning segments follow: residues 34 to 54 (FISTIVLISYCFSWLAIQALW), 114 to 136 (YFYYLTNYFSTYSVFSLTFDRLI), 150 to 170 (FIAISLLVLQFLLAILSFYIA), 199 to 219 (VRTVVMVSCIIVTGFAYYLSV), 250 to 270 (ILIVLQFSCTMISSFGVNLLL), and 284 to 304 (VGAFLPGVAYANLCLPLAIYF).

Belongs to the nematode receptor-like protein sra family.

It localises to the membrane. The polypeptide is Serpentine receptor class alpha-23 (sra-23) (Caenorhabditis elegans).